A 774-amino-acid chain; its full sequence is Lysyl oxidase homolog 2 (774 aa).

A signal peptide spans 1-24; sequence MEGFLGFNHNHCFIVLFFVSLSLA. 4 SRCR domains span residues 57 to 158, 187 to 301, 325 to 424, and 434 to 543; these read LRLA…VVCS, IRPI…ASCV, VRLK…VRCN, and LRLV…VSCS. Disulfide bonds link Cys83/Cys147, Cys96/Cys157, Cys127/Cys137, Cys217/Cys290, Cys230/Cys300, Cys264/Cys274, Cys350/Cys413, Cys363/Cys423, and Cys394/Cys404. N-linked (GlcNAc...) asparagine glycosylation occurs at Asn287. The N-linked (GlcNAc...) asparagine glycan is linked to Asn454. 3 disulfide bridges follow: Cys463-Cys529, Cys476-Cys542, and Cys510-Cys520. The lysyl-oxidase like stretch occupies residues 547–751; that stretch reads PDLVLNAELV…MYNSVHNGAN (205 aa). Positions 548 and 549 each coordinate Ca(2+). 4 disulfide bridges follow: Cys572–Cys624, Cys578–Cys694, Cys656–Cys672, and Cys662–Cys684. Positions 625, 627, and 629 each coordinate Cu cation. N-linked (GlcNAc...) asparagine glycosylation is present at Asn643. The lysine tyrosylquinone (Lys-Tyr) cross-link spans 652–688; that stretch reads KASFCLEDTECEADVQKQYECANFGEQGITVGCWDVY. Tyr688 bears the 2',4',5'-topaquinone mark. Ca(2+) contacts are provided by Glu721, Asp723, Asn726, and Asn727.

This sequence belongs to the lysyl oxidase family. Requires Cu cation as cofactor. Lysine tyrosylquinone residue is required as a cofactor. The lysine tyrosylquinone cross-link (LTQ) is generated by condensation of the epsilon-amino group of a lysine with a topaquinone produced by oxidation of tyrosine.

The protein localises to the secreted. It localises to the extracellular space. Its subcellular location is the extracellular matrix. The protein resides in the basement membrane. It is found in the nucleus. The protein localises to the chromosome. It localises to the endoplasmic reticulum. It catalyses the reaction L-lysyl-[protein] + O2 + H2O = (S)-2-amino-6-oxohexanoyl-[protein] + H2O2 + NH4(+). In terms of biological role, mediates the post-translational oxidative deamination of lysine residues on target proteins leading to the formation of deaminated lysine (allysine). Acts as a transcription corepressor and specifically mediates deamination of trimethylated 'Lys-4' of histone H3 (H3K4me3), a specific tag for epigenetic transcriptional activation. Shows no activity against histone H3 when it is trimethylated on 'Lys-9' (H3K9me3) or 'Lys-27' (H3K27me3) or when 'Lys-4' is monomethylated (H3K4me1) or dimethylated (H3K4me2). Also mediates deamination of methylated TAF10, a member of the transcription factor IID (TFIID) complex, which induces release of TAF10 from promoters, leading to inhibition of TFIID-dependent transcription. LOXL2-mediated deamination of TAF10 results in transcriptional repression of genes required for embryonic stem cell pluripotency including POU5F1/OCT4, NANOG, KLF4 and SOX2. Involved in epithelial to mesenchymal transition (EMT) via interaction with SNAI1 and participates in repression of E-cadherin CDH1, probably by mediating deamination of histone H3. During EMT, involved with SNAI1 in negatively regulating pericentromeric heterochromatin transcription. SNAI1 recruits LOXL2 to pericentromeric regions to oxidize histone H3 and repress transcription which leads to release of heterochromatin component CBX5/HP1A, enabling chromatin reorganization and acquisition of mesenchymal traits. Interacts with the endoplasmic reticulum protein HSPA5 which activates the IRE1-XBP1 pathway of the unfolded protein response, leading to expression of several transcription factors involved in EMT and subsequent EMT induction. When secreted into the extracellular matrix, promotes cross-linking of extracellular matrix proteins by mediating oxidative deamination of peptidyl lysine residues in precursors to fibrous collagen and elastin. Acts as a regulator of sprouting angiogenesis, probably via collagen IV scaffolding. Acts as a regulator of chondrocyte differentiation, probably by regulating expression of factors that control chondrocyte differentiation. In Gallus gallus (Chicken), this protein is Lysyl oxidase homolog 2 (LOXL2).